The primary structure comprises 100 residues: Small ribosomal subunit protein uS14c (100 aa).

Belongs to the universal ribosomal protein uS14 family. As to quaternary structure, part of the 30S ribosomal subunit.

It localises to the plastid. The protein resides in the chloroplast. Functionally, binds 16S rRNA, required for the assembly of 30S particles. This is Small ribosomal subunit protein uS14c from Mesostigma viride (Green alga).